The sequence spans 301 residues: Transcriptional activator protein NhaR (301 aa).

In terms of domain architecture, HTH lysR-type spans 6–63 (INYNHLYYFWHVYKEGSVVGAAEALYLTPQTITGQIRALEERLQGKLFKRKGRGLEPS). Positions 23-42 (VVGAAEALYLTPQTITGQIR) form a DNA-binding region, H-T-H motif.

The protein belongs to the LysR transcriptional regulatory family.

The protein localises to the cytoplasm. Plays a role in the positive regulation of NhaA. In Escherichia coli (strain K12), this protein is Transcriptional activator protein NhaR (nhaR).